Here is a 552-residue protein sequence, read N- to C-terminus: Dihydroxy-acid dehydratase (552 aa).

Residue Asp-78 coordinates Mg(2+). Residue Cys-119 coordinates [2Fe-2S] cluster. Asp-120 and Lys-121 together coordinate Mg(2+). N6-carboxylysine is present on Lys-121. Cys-191 provides a ligand contact to [2Fe-2S] cluster. Residue Glu-442 coordinates Mg(2+). Catalysis depends on Ser-468, which acts as the Proton acceptor.

The protein belongs to the IlvD/Edd family. As to quaternary structure, homodimer. The cofactor is [2Fe-2S] cluster. Mg(2+) is required as a cofactor.

The enzyme catalyses (2R)-2,3-dihydroxy-3-methylbutanoate = 3-methyl-2-oxobutanoate + H2O. The catalysed reaction is (2R,3R)-2,3-dihydroxy-3-methylpentanoate = (S)-3-methyl-2-oxopentanoate + H2O. It participates in amino-acid biosynthesis; L-isoleucine biosynthesis; L-isoleucine from 2-oxobutanoate: step 3/4. Its pathway is amino-acid biosynthesis; L-valine biosynthesis; L-valine from pyruvate: step 3/4. Functions in the biosynthesis of branched-chain amino acids. Catalyzes the dehydration of (2R,3R)-2,3-dihydroxy-3-methylpentanoate (2,3-dihydroxy-3-methylvalerate) into 2-oxo-3-methylpentanoate (2-oxo-3-methylvalerate) and of (2R)-2,3-dihydroxy-3-methylbutanoate (2,3-dihydroxyisovalerate) into 2-oxo-3-methylbutanoate (2-oxoisovalerate), the penultimate precursor to L-isoleucine and L-valine, respectively. This is Dihydroxy-acid dehydratase from Caldicellulosiruptor bescii (strain ATCC BAA-1888 / DSM 6725 / KCTC 15123 / Z-1320) (Anaerocellum thermophilum).